Here is a 140-residue protein sequence, read N- to C-terminus: Inner membrane protein YphA (140 aa).

Residues 1 to 13 are Cytoplasmic-facing; that stretch reads MNTLRYFDFGAAR. Residues 14–34 form a helical membrane-spanning segment; that stretch reads PVLLLIARIAVVLIFIIFGFP. Residues 35 to 56 lie on the Periplasmic side of the membrane; the sequence is KMMGFDGTVQYMASLGAPMPML. A helical transmembrane segment spans residues 57–77; it reads AAIIAVVMEVPAAILIVLGFF. Topologically, residues 78–79 are cytoplasmic; sequence TR. A helical membrane pass occupies residues 80–100; that stretch reads PLAVLFIFYTLGTAVIGHHYW. At 101–116 the chain is on the periplasmic side; it reads DMTGDAVGPNMINFWK. A helical transmembrane segment spans residues 117 to 137; that stretch reads NVSIAGAFLLLAITGPGAISL. Topologically, residues 138 to 140 are cytoplasmic; that stretch reads DRR.

It belongs to the DoxX family.

It localises to the cell inner membrane. The sequence is that of Inner membrane protein YphA (yphA) from Escherichia coli (strain K12).